A 314-amino-acid chain; its full sequence is Regulator of microtubule dynamics protein 1 (314 aa).

The residue at position 165 (lysine 165) is an N6-succinyllysine. TPR repeat units lie at residues 168–204 and 222–258; these read AICL…NPKD and PWYQ…DPNF.

The protein belongs to the RMDN family. In terms of assembly, interacts with microtubules.

The protein localises to the cytoplasm. The protein resides in the cytoskeleton. It is found in the spindle. It localises to the spindle pole. This chain is Regulator of microtubule dynamics protein 1 (RMDN1), found in Pongo abelii (Sumatran orangutan).